The sequence spans 473 residues: Benzoyl-CoA oxygenase component B (473 aa).

The protein belongs to the benzoyl-CoA oxygenase component B family. Monomer. The subunit composition of the active BoxA/BoxB protein complex is not known. It depends on Fe cation as a cofactor.

It catalyses the reaction benzoyl-CoA + NADPH + O2 + H(+) = 2,3-epoxy-2,3-dihydrobenzoyl-CoA + NADP(+) + H2O. Its function is as follows. The BoxA/BoxB complex catalyzes the aerobic reduction/oxygenation of the aromatic ring of benzoyl-CoA to form 2,3-epoxy-2,3-dihydrobenzoyl-CoA. BoxB acts as the benzoyl-CoA oxygenase, after being reduced by the reductase component BoxA. BoxAB does not act on NADH or benzoate. In Aromatoleum evansii (Azoarcus evansii), this protein is Benzoyl-CoA oxygenase component B (boxB).